The sequence spans 500 residues: L-arabinose isomerase (500 aa).

Mn(2+) is bound by residues glutamate 306, glutamate 333, histidine 350, and histidine 450.

The protein belongs to the arabinose isomerase family. As to quaternary structure, homohexamer. Requires Mn(2+) as cofactor.

The enzyme catalyses beta-L-arabinopyranose = L-ribulose. It participates in carbohydrate degradation; L-arabinose degradation via L-ribulose; D-xylulose 5-phosphate from L-arabinose (bacterial route): step 1/3. In terms of biological role, catalyzes the conversion of L-arabinose to L-ribulose. In Yersinia pestis bv. Antiqua (strain Nepal516), this protein is L-arabinose isomerase.